The following is a 434-amino-acid chain: Glutamyl-tRNA reductase (434 aa).

Substrate is bound by residues 49 to 52 (TCNR), Ser-109, 114 to 116 (EPQ), and Gln-120. Cys-50 acts as the Nucleophile in catalysis. 189–194 (GAGEMC) serves as a coordination point for NADP(+).

It belongs to the glutamyl-tRNA reductase family. As to quaternary structure, homodimer.

The enzyme catalyses (S)-4-amino-5-oxopentanoate + tRNA(Glu) + NADP(+) = L-glutamyl-tRNA(Glu) + NADPH + H(+). Its pathway is porphyrin-containing compound metabolism; protoporphyrin-IX biosynthesis; 5-aminolevulinate from L-glutamyl-tRNA(Glu): step 1/2. Its function is as follows. Catalyzes the NADPH-dependent reduction of glutamyl-tRNA(Glu) to glutamate 1-semialdehyde (GSA). The sequence is that of Glutamyl-tRNA reductase from Geotalea daltonii (strain DSM 22248 / JCM 15807 / FRC-32) (Geobacter daltonii).